Reading from the N-terminus, the 430-residue chain is Adenylosuccinate synthetase (430 aa).

Residues 12–18 (GDEGKGK) and 40–42 (GHT) each bind GTP. Residue D13 is the Proton acceptor of the active site. Residues D13 and G40 each coordinate Mg(2+). Residues 13 to 16 (DEGK), 38 to 41 (NAGH), T129, R143, Q224, T239, and R303 contribute to the IMP site. The active-site Proton donor is H41. Substrate is bound at residue 299–305 (TVSNRER). Residues R305, 331–333 (KLD), and 413–415 (STG) each bind GTP.

The protein belongs to the adenylosuccinate synthetase family. Homodimer. Requires Mg(2+) as cofactor.

It localises to the cytoplasm. The enzyme catalyses IMP + L-aspartate + GTP = N(6)-(1,2-dicarboxyethyl)-AMP + GDP + phosphate + 2 H(+). Its pathway is purine metabolism; AMP biosynthesis via de novo pathway; AMP from IMP: step 1/2. Plays an important role in the de novo pathway of purine nucleotide biosynthesis. Catalyzes the first committed step in the biosynthesis of AMP from IMP. The protein is Adenylosuccinate synthetase of Ehrlichia ruminantium (strain Welgevonden).